The chain runs to 156 residues: Single-stranded DNA-binding protein 1 (156 aa).

The 104-residue stretch at 1–104 folds into the SSB domain; that stretch reads MLNRTILVGR…VVADSIQFLE (104 aa). Residues 122–146 are disordered; sequence QTRGQSQYSNNKPVKDNPFANANCP.

As to quaternary structure, homotetramer.

The polypeptide is Single-stranded DNA-binding protein 1 (ssb1) (Staphylococcus aureus (strain MSSA476)).